Consider the following 311-residue polypeptide: MALPILLDCDPGHDDAIAIVLALASPELDVKAITSSAGNQTPEKTLRNVLRMLTLLNRTDIPVASGAVKPLMRNLIIADNVHGESGLDGPALPEPTFAPQNCTAVELMAKTLRESEEPVTIVSTGPQTNVALLLNSHPELHSKIARIVIMGGAMGLGNWTPAAEFNIYVDPEAAEIVFQSGIPVVMAGLDVTHKAQIHVEDTERFRAIGNPVSTIVAELLDFFLEYHKDEKWGFVGAPLHDPCTIAWLLKPELFTTVERWVGVETQGKYTQGMTVVDYYYLTGNKPNATVMVDVDRQGFVDLLADRLKFYA.

The active site involves H240.

Belongs to the IUNH family. RihA subfamily.

Hydrolyzes with equal efficiency cytidine or uridine to ribose and cytosine or uracil, respectively. In Escherichia coli O45:K1 (strain S88 / ExPEC), this protein is Pyrimidine-specific ribonucleoside hydrolase RihA.